The following is a 218-amino-acid chain: Elongation factor Ts (218 aa).

The involved in Mg(2+) ion dislocation from EF-Tu stretch occupies residues 82-85; sequence TDFV.

It belongs to the EF-Ts family.

Its subcellular location is the cytoplasm. In terms of biological role, associates with the EF-Tu.GDP complex and induces the exchange of GDP to GTP. It remains bound to the aminoacyl-tRNA.EF-Tu.GTP complex up to the GTP hydrolysis stage on the ribosome. The protein is Elongation factor Ts of Prochlorococcus marinus (strain AS9601).